A 474-amino-acid chain; its full sequence is Semenogelin-2 (474 aa).

Residues 1-23 form the signal peptide; the sequence is MKSIILFVLSLLLILEKQAAVMG. 5 disordered regions span residues 24–62, 132–158, 173–194, 226–247, and 272–474; these read QKGG…SKGS, GGQA…LSSQ, KEQA…QSSY, VREE…DRLQ, and NLNQ…SSTE. Polar residues-rich tracts occupy residues 31 to 40, 137 to 158, and 174 to 194; these read QLPSGSSQFP, RGTQ…LSSQ, and EQAS…QSSY. Over residues 292-310 the composition is skewed to basic and acidic residues; the sequence is RTEERQLNHGEKSVQKDVS. The segment covering 325-334 has biased composition (polar residues); sequence KSQNQVTIHS. Over residues 335–346 the composition is skewed to basic and acidic residues; it reads QDQEHGHKENKM. Over residues 372-397 the composition is skewed to polar residues; it reads GSISIQTEEQIHGKSQNQVRIPSQAQ. Over residues 399–426 the composition is skewed to basic and acidic residues; that stretch reads YGHKENKISYRSSSTEERRLNSGEKDVQ. The span at 445–455 shows a compositional bias: polar residues; it reads KSQNQVTIPSQ. Residues 456–465 show a composition bias toward basic and acidic residues; that stretch reads DQEHGHKENK.

This sequence belongs to the semenogelin family. Interacts with SERPINA5.

It localises to the secreted. Its function is as follows. Participates in the formation of a gel matrix (sperm coagulum) entrapping the accessory gland secretions and ejaculated spermatozoa. The polypeptide is Semenogelin-2 (SEMG2) (Gorilla gorilla gorilla (Western lowland gorilla)).